Reading from the N-terminus, the 258-residue chain is 5'-nucleotidase SurE (258 aa).

Positions 10, 11, 41, and 96 each coordinate a divalent metal cation.

It belongs to the SurE nucleotidase family. A divalent metal cation serves as cofactor.

It localises to the cytoplasm. It carries out the reaction a ribonucleoside 5'-phosphate + H2O = a ribonucleoside + phosphate. In terms of biological role, nucleotidase that shows phosphatase activity on nucleoside 5'-monophosphates. In Sorangium cellulosum (strain So ce56) (Polyangium cellulosum (strain So ce56)), this protein is 5'-nucleotidase SurE.